A 311-amino-acid chain; its full sequence is Forkhead box protein R2 (311 aa).

Disordered stretches follow at residues 56-76 (PPEM…PCEP) and 90-171 (LGSQ…QSPE). Basic and acidic residues predominate over residues 115 to 128 (QKDEGSNCSEDKVV). Residues 129-143 (ESLPSSSSEQSPLQK) show a composition bias toward low complexity. Acidic residues predominate over residues 153–164 (ELTEEEAEEPDD). Positions 192–294 (RPPLNCSHLI…RVLAFAQRER (103 aa)) form a DNA-binding region, fork-head.

In terms of tissue distribution, expressed in breast cancer cell lines and primary cancer.

Its subcellular location is the nucleus. In Homo sapiens (Human), this protein is Forkhead box protein R2 (FOXR2).